The primary structure comprises 309 residues: Methionyl-tRNA formyltransferase (309 aa).

Residue 107-110 (SLLP) coordinates (6S)-5,6,7,8-tetrahydrofolate.

The protein belongs to the Fmt family.

The enzyme catalyses L-methionyl-tRNA(fMet) + (6R)-10-formyltetrahydrofolate = N-formyl-L-methionyl-tRNA(fMet) + (6S)-5,6,7,8-tetrahydrofolate + H(+). Its function is as follows. Attaches a formyl group to the free amino group of methionyl-tRNA(fMet). The formyl group appears to play a dual role in the initiator identity of N-formylmethionyl-tRNA by promoting its recognition by IF2 and preventing the misappropriation of this tRNA by the elongation apparatus. In Borrelia duttonii (strain Ly), this protein is Methionyl-tRNA formyltransferase.